A 558-amino-acid polypeptide reads, in one-letter code: Small ribosomal subunit protein bS1 (558 aa).

6 S1 motif domains span residues G21 to E87, S105 to R171, G192 to K260, E277 to K347, G364 to K434, and G451 to H520.

This sequence belongs to the bacterial ribosomal protein bS1 family.

Functionally, binds mRNA; thus facilitating recognition of the initiation point. It is needed to translate mRNA with a short Shine-Dalgarno (SD) purine-rich sequence. This is Small ribosomal subunit protein bS1 (rpsA) from Buchnera aphidicola subsp. Acyrthosiphon pisum (strain APS) (Acyrthosiphon pisum symbiotic bacterium).